The chain runs to 1544 residues: Zinc finger protein GLI2 (1544 aa).

The disordered stretch occupies residues 1-26 (METSAPAPALEKKEAKSGLLEDSSFP). Residues Ser145, Ser230, Ser232, and Ser238 each carry the phosphoserine modification. The segment at 338–364 (SSSSSNCLNDANQNKQNSESAVSSTVN) is disordered. Ser385 bears the Phosphoserine; by DYRK2 mark. A C2H2-type 1 zinc finger spans residues 417 to 444 (TNCHWADCTKEYDTQEQLVHHINNEHIH). A C2H2-type 2; degenerate zinc finger spans residues 455 to 477 (QACTREQKPFKAQYMLVVHMRRH). C2H2-type zinc fingers lie at residues 483–507 (HKCT…LRSH), 513–538 (YVCE…NRTH), and 544–569 (YICK…KTVH). Disordered regions lie at residues 557–619 (DPSS…TSHT) and 635–682 (GLCQ…ALAD). Over residues 569 to 585 (HGPDAHVTKKQRNDVHV) the composition is skewed to basic and acidic residues. A compositionally biased stretch (low complexity) spans 637–657 (CQSSPGAQSSCSSEPSPLGSA). Phosphoserine is present on Ser707. The residue at position 708 (Thr708) is a Phosphothreonine. N6-acetyllysine; by EP300 is present on Lys740. Disordered stretches follow at residues 781-800 (SQLQ…AYTV), 805-861 (SGIS…PGLL), 908-963 (ALPG…RRPD), 995-1016 (VQSH…RPPS), 1166-1220 (FGQY…CLGM), and 1422-1457 (GGCP…VSST). Composition is skewed to polar residues over residues 790-800 (STSTMSSAYTV) and 805-814 (SGISPYFSSR). Positions 954–963 (RASDPVRRPD) are enriched in basic and acidic residues. Ser997 is subject to Phosphoserine; by DYRK2. Composition is skewed to polar residues over residues 997-1009 (SHPS…TRNA), 1173-1190 (NPQS…TQPH), and 1200-1209 (SRGSYTQQPR).

The protein belongs to the GLI C2H2-type zinc-finger protein family. As to quaternary structure, interacts with ZIC1 and ZIC2. Interacts with STK36. Interacts with SUFU; this inhibits transcriptional activation mediated by GLI2. Interacts (via C-terminal internal region) with FOXC1 (via N-terminus); this interaction is direct and increases GLI2 DNA-binding and transcriptional activity through a smoothened (SMO)-independent Hedgehog (Hh) signaling pathway. In terms of processing, phosphorylated in vitro by ULK3. Phosphorylated by DYRK2; this inhibits GLI2 transcription factor activity and promotes proteasomal degradation of GLI2. Post-translationally, acetylation at Lys-740 inhibits Hh target gene expression, probably by impeding entry into chromatin thus preventing promoter occupancy.

Its subcellular location is the nucleus. The protein localises to the cytoplasm. It localises to the cell projection. The protein resides in the cilium. Its function is as follows. Functions as a transcription regulator in the hedgehog (Hh) pathway. Functions as a transcriptional activator. May also function as transcriptional repressor. Requires STK36 for full transcriptional activator activity. Binds to the DNA sequence 5'-GAACCACCCA-3' which is part of the TRE-2S regulatory element. Is involved in the smoothened (SHH) signaling pathway. Required for normal skeleton development. The protein is Zinc finger protein GLI2 of Mus musculus (Mouse).